Here is a 312-residue protein sequence, read N- to C-terminus: Salivary protein SG34 (312 aa).

An N-terminal signal peptide occupies residues 1 to 20 (MSPSKKILVLLLFPILLVSS). Residues 95–158 (NMEVQLLRES…QEEIEEQTKQ (64 aa)) are a coiled coil.

Belongs to the salivary protein SG34 family. As to expression, female salivary gland (at protein level). Low-level expression in ovary.

Functionally, possible serine protease. In terms of biological role, (Microbial infection) Modulates replication of duck Tembusu virus in salivary glands and virus release into the saliva, probably via the regulation of antimicrobial peptides expression in response to virus infection. (Microbial infection) Enhances replication of dengue virus type 2 in human keratinocytes, probably by suppressing the production of type I interferons and antimicrobial peptides in response to virus infection. In Aedes aegypti (Yellowfever mosquito), this protein is Salivary protein SG34.